The primary structure comprises 151 residues: Glutamate mutase sigma subunit 1 (151 aa).

The region spanning 7 to 140 is the B12-binding domain; it reads PRTVILGVIG…EMLREDLQLT (134 aa). Adenosylcob(III)alamin-binding positions include 17-21, His-20, 65-67, and 96-100; these read SDAHV, SSL, and NLAVG.

Belongs to the methylaspartate mutase GlmS subunit family. As to quaternary structure, heterotetramer composed of 2 epsilon subunits (GlmE) and 2 sigma subunits (GlmS). GlmE exists as a homodimer and GlmS as a monomer. Adenosylcob(III)alamin is required as a cofactor.

The catalysed reaction is (2S,3S)-3-methyl-L-aspartate = L-glutamate. Its pathway is amino-acid degradation; L-glutamate degradation via mesaconate pathway; acetate and pyruvate from L-glutamate: step 1/4. Its function is as follows. Catalyzes the carbon skeleton rearrangement of L-glutamate to L-threo-3-methylaspartate ((2S,3S)-3-methylaspartate). This Haloarcula marismortui (strain ATCC 43049 / DSM 3752 / JCM 8966 / VKM B-1809) (Halobacterium marismortui) protein is Glutamate mutase sigma subunit 1.